The chain runs to 544 residues: Chaperonin GroEL (544 aa).

ATP contacts are provided by residues 29 to 32 (TLGP), lysine 50, 86 to 90 (DGTTT), glycine 414, 479 to 481 (DAA), and aspartate 495.

It belongs to the chaperonin (HSP60) family. In terms of assembly, forms a cylinder of 14 subunits composed of two heptameric rings stacked back-to-back. Interacts with the co-chaperonin GroES.

It localises to the cytoplasm. The enzyme catalyses ATP + H2O + a folded polypeptide = ADP + phosphate + an unfolded polypeptide.. Its function is as follows. Together with its co-chaperonin GroES, plays an essential role in assisting protein folding. The GroEL-GroES system forms a nano-cage that allows encapsulation of the non-native substrate proteins and provides a physical environment optimized to promote and accelerate protein folding. This chain is Chaperonin GroEL, found in Treponema denticola (strain ATCC 35405 / DSM 14222 / CIP 103919 / JCM 8153 / KCTC 15104).